Consider the following 307-residue polypeptide: Dihydroorotate dehydrogenase A (fumarate) (307 aa).

FMN is bound by residues S21 and 46–47 (KT). Residues K46, 70–74 (NSVGL), and N130 each bind substrate. Residue N130 participates in FMN binding. The active-site Nucleophile is C133. The FMN site is built by K168 and I194. Residue 195 to 196 (NT) participates in substrate binding. Residues G220, 246–247 (GG), and 268–269 (GS) each bind FMN.

It belongs to the dihydroorotate dehydrogenase family. Type 1 subfamily. As to quaternary structure, homodimer. It depends on FMN as a cofactor.

The protein localises to the cytoplasm. The catalysed reaction is (S)-dihydroorotate + fumarate = orotate + succinate. The protein operates within pyrimidine metabolism; UMP biosynthesis via de novo pathway. Functionally, catalyzes the conversion of dihydroorotate to orotate with fumarate as the electron acceptor. The polypeptide is Dihydroorotate dehydrogenase A (fumarate) (pyrD) (Lactobacillus delbrueckii subsp. bulgaricus (strain ATCC 11842 / DSM 20081 / BCRC 10696 / JCM 1002 / NBRC 13953 / NCIMB 11778 / NCTC 12712 / WDCM 00102 / Lb 14)).